A 196-amino-acid polypeptide reads, in one-letter code: Small ribosomal subunit protein uS4c (196 aa).

The interval 20–39 (GLTRKTPKSGSNLKKKFHSG) is disordered. The 64-residue stretch at 89 to 152 (MRLDNILFRL…RSKCLVQNSI (64 aa)) folds into the S4 RNA-binding domain.

It belongs to the universal ribosomal protein uS4 family. As to quaternary structure, part of the 30S ribosomal subunit. Contacts protein S5. The interaction surface between S4 and S5 is involved in control of translational fidelity.

The protein resides in the plastid. Its subcellular location is the chloroplast. One of the primary rRNA binding proteins, it binds directly to 16S rRNA where it nucleates assembly of the body of the 30S subunit. Its function is as follows. With S5 and S12 plays an important role in translational accuracy. The protein is Small ribosomal subunit protein uS4c (rps4) of Dendrocalamus giganteus (Giant bamboo).